Here is a 624-residue protein sequence, read N- to C-terminus: MAAGETQLYAKVSNKLKGRSTPSLLDPLLAMGFPTHTALKALAATGRKTAEAAADWLHGHCNDPSLDDPIPQEYALFLCPTGPLLEKLQEFWRESRRQCAKNRAHEVFPHVTLCDFFTCEDQKVECLYEALRRAGDRILGSFPTLVPLVLHSSISYLGFFINDSPADAIREFAMAFATEAAVLADCTIKPCTKQLHLTLAHKFYPHHQRTLEQLAKAIQPSHSCQWTAALYSRDMRFVHYQTLKALFQYKPQNADELMLSAGDYIFVDPTQQEEASEGWAIGISHRTGCRGFLPENYTERANEADTWVKHRTYTFNLAMDLNSRKDFEASCRGNGEPHTPSMSKSVSSIQALQATISRRGILVVRHGERVDQVFGKSWLQQCTTADGKYYRPDLNFPRSLPRRSNGIKDFENDPPLSSCGIFQARLAGEALLDSGVRVTAVFASPALRCVQTAKHILEELKLEKKLKIRVEPGIFEWMKWEASKATLTFLTLEELKEANFNVDLDYRPALPRCSLMPAESYDQYVERCAVSMGQIINTCPQDMGITLIVSHSSALDSCTRPLLGLPPRECGDFAQLVRKIPSLGMCFCEENREDGKWDLVNPPVKTLTHGANSVFNWRNWISSN.

The 42-residue stretch at 19 to 60 (RSTPSLLDPLLAMGFPTHTALKALAATGRKTAEAAADWLHGH) folds into the UBA domain. The 66-residue stretch at 238-303 (VHYQTLKALF…PENYTERANE (66 aa)) folds into the SH3 domain. A phosphatase-like region spans residues 358 to 624 (RRGILVVRHG…FNWRNWISSN (267 aa)).

Homodimer or homooligomer. Interacts with CBL. Part of a complex containing CBL and activated EGFR. Interacts with ubiquitin and with mono-ubiquitinated proteins. Interacts with dynamin.

It localises to the cytoplasm. The protein localises to the nucleus. Its function is as follows. Interferes with CBL-mediated down-regulation and degradation of receptor-type tyrosine kinases. Promotes accumulation of activated target receptors, such as T-cell receptors, EGFR and PDGFRB, on the cell surface. May inhibit dynamin-dependent endocytic pathways by functionally sequestering dynamin via its SH3 domain. Exhibits negligible protein tyrosine phosphatase activity at neutral pH. May act as a dominant-negative regulator of UBASH3B-dependent dephosphorylation. The protein is Ubiquitin-associated and SH3 domain-containing protein A (Ubash3a) of Mus musculus (Mouse).